Reading from the N-terminus, the 354-residue chain is Protein-arginine kinase (354 aa).

Residues 24–254 form the Phosphagen kinase C-terminal domain; that stretch reads IVLSSRIRLA…QQIIQQEKMA (231 aa). ATP is bound by residues 27 to 31, H92, R125, 176 to 180, and 207 to 212; these read SSRIR, RASVM, and RGIYGE. Positions 337–342 match the RDXXRA motif of the pArg binding pocket involved in allosteric regulation motif; it reads RDYRRA.

The protein belongs to the ATP:guanido phosphotransferase family.

It catalyses the reaction L-arginyl-[protein] + ATP = N(omega)-phospho-L-arginyl-[protein] + ADP + H(+). With respect to regulation, appears to be allosterically activated by the binding of pArg-containing polypeptides to the pArg-binding pocket localized in the C-terminal domain of McsB. Its function is as follows. Catalyzes the specific phosphorylation of arginine residues in a large number of proteins. Is part of the bacterial stress response system. Protein arginine phosphorylation has a physiologically important role and is involved in the regulation of many critical cellular processes, such as protein homeostasis, motility, competence, and stringent and stress responses, by regulating gene expression and protein activity. The polypeptide is Protein-arginine kinase (Bacillus thuringiensis subsp. konkukian (strain 97-27)).